A 288-amino-acid chain; its full sequence is Protoheme IX farnesyltransferase 2 (288 aa).

9 consecutive transmembrane segments (helical) span residues 8–28 (ITKPGIIFGNLISVAAGFFLA), 36–56 (LMLFLTTLAGVGLVIASGCVV), 85–105 (VAFVYALAMLLLGTALLFQLV), 108–128 (LSAVVVLLGYVYYVFFYTMWY), 131–151 (NSVYGTLVGSISGAVPPLVGY), 152–172 (LAVTNFISLEAILLFTMFCLW), 211–231 (AYVVAFGAVSLGLFLLGEAGY), 233–252 (YLAVAAVVCLMWTKVTFRSI), and 267–287 (VSLLVVMGISGVLGVELIPLA).

It belongs to the UbiA prenyltransferase family. Protoheme IX farnesyltransferase subfamily.

The protein localises to the cell inner membrane. It carries out the reaction heme b + (2E,6E)-farnesyl diphosphate + H2O = Fe(II)-heme o + diphosphate. It participates in porphyrin-containing compound metabolism; heme O biosynthesis; heme O from protoheme: step 1/1. In terms of biological role, converts heme B (protoheme IX) to heme O by substitution of the vinyl group on carbon 2 of heme B porphyrin ring with a hydroxyethyl farnesyl side group. This chain is Protoheme IX farnesyltransferase 2, found in Vibrio parahaemolyticus serotype O3:K6 (strain RIMD 2210633).